The chain runs to 210 residues: dTTP/UTP pyrophosphatase (210 aa).

Catalysis depends on D89, which acts as the Proton acceptor.

It belongs to the Maf family. YhdE subfamily. A divalent metal cation is required as a cofactor.

It localises to the cytoplasm. It carries out the reaction dTTP + H2O = dTMP + diphosphate + H(+). The catalysed reaction is UTP + H2O = UMP + diphosphate + H(+). Functionally, nucleoside triphosphate pyrophosphatase that hydrolyzes dTTP and UTP. May have a dual role in cell division arrest and in preventing the incorporation of modified nucleotides into cellular nucleic acids. The chain is dTTP/UTP pyrophosphatase from Burkholderia lata (strain ATCC 17760 / DSM 23089 / LMG 22485 / NCIMB 9086 / R18194 / 383).